The sequence spans 496 residues: MGTQKVTPALIFAITVATIGSFQFGYNTGVINAPEKIIKEFINKTLTDKGNAPPSEVLLTSLWSLSVAIFSVGGMIGSFSVGLFVNRFGRRNSMLIVNLLAVTGGCFMGLCKVAKSVEMLILGRLVIGLFCGLCTGFVPMYIGEISPTALRGAFGTLNQLGIVVGILVAQIFGLEFILGSEELWPLLLGFTILPAILQSAALPFCPESPRFLLINRKEEENAKQILQRLWGTQDVSQDIQEMKDESARMSQEKQVTVLELFRVSSYRQPIIISIVLQLSQQLSGINAVFYYSTGIFKDAGVQEPIYATIGAGVVNTIFTVVSLFLVERAGRRTLHMIGLGGMAFCSTLMTVSLLLKDNYNGMSFVCIGAILVFVAFFEIGPGPIPWFIVAELFSQGPRPAAMAVAGCSNWTSNFLVGLLFPSAAHYLGAYVFIIFTGFLITFLAFTFFKVPETRGRTFEDITRAFEGQAHGADRSGKDGVMEMNSIEPAKETTTNV.

The Cytoplasmic segment spans residues 1–10 (MGTQKVTPAL). Residues 11–32 (IFAITVATIGSFQFGYNTGVIN) form a helical membrane-spanning segment. At 33 to 64 (APEKIIKEFINKTLTDKGNAPPSEVLLTSLWS) the chain is on the extracellular side. Residue Asn-43 is glycosylated (N-linked (GlcNAc...) asparagine). Residues 65 to 85 (LSVAIFSVGGMIGSFSVGLFV) form a helical membrane-spanning segment. Topologically, residues 86–90 (NRFGR) are cytoplasmic. A helical membrane pass occupies residues 91-111 (RNSMLIVNLLAVTGGCFMGLC). Residues 112-118 (KVAKSVE) lie on the Extracellular side of the membrane. A helical membrane pass occupies residues 119-142 (MLILGRLVIGLFCGLCTGFVPMYI). Topologically, residues 143 to 153 (GEISPTALRGA) are cytoplasmic. The helical transmembrane segment at 154 to 174 (FGTLNQLGIVVGILVAQIFGL) threads the bilayer. Residue Gln-159 participates in D-glucose binding. Over 175-183 (EFILGSEEL) the chain is Extracellular. The helical transmembrane segment at 184 to 204 (WPLLLGFTILPAILQSAALPF) threads the bilayer. Residues 205-269 (CPESPRFLLI…LFRVSSYRQP (65 aa)) lie on the Cytoplasmic side of the membrane. Residue Thr-232 is modified to Phosphothreonine. Residues 270–290 (IIISIVLQLSQQLSGINAVFY) traverse the membrane as a helical segment. An important for selectivity against fructose region spans residues 277 to 279 (QLS). D-glucose contacts are provided by residues 280–281 (QQ) and Asn-286. The Extracellular segment spans residues 291–304 (YSTGIFKDAGVQEP). The chain crosses the membrane as a helical span at residues 305 to 325 (IYATIGAGVVNTIFTVVSLFL). D-glucose is bound at residue Asn-315. At 326–331 (VERAGR) the chain is on the cytoplasmic side. The helical transmembrane segment at 332–352 (RTLHMIGLGGMAFCSTLMTVS) threads the bilayer. At 353–363 (LLLKDNYNGMS) the chain is on the extracellular side. Residues 364-389 (FVCIGAILVFVAFFEIGPGPIPWFIV) form a helical membrane-spanning segment. D-glucose contacts are provided by Glu-378 and Trp-386. The Cytoplasmic portion of the chain corresponds to 390–399 (AELFSQGPRP). Residues 400-420 (AAMAVAGCSNWTSNFLVGLLF) form a helical membrane-spanning segment. The Extracellular segment spans residues 421 to 429 (PSAAHYLGA). The chain crosses the membrane as a helical span at residues 430-450 (YVFIIFTGFLITFLAFTFFKV). Over 451 to 496 (PETRGRTFEDITRAFEGQAHGADRSGKDGVMEMNSIEPAKETTTNV) the chain is Cytoplasmic. Phosphoserine is present on residues Ser-475 and Ser-485. Thr-492 carries the post-translational modification Phosphothreonine.

This sequence belongs to the major facilitator superfamily. Sugar transporter (TC 2.A.1.1) family. Glucose transporter subfamily. In terms of assembly, interacts with SMIM43; the interaction may promote SLC2A3-mediated glucose transport to meet the energy needs of mesendoderm differentiation. As to expression, highly expressed in brain. Expressed in many tissues.

Its subcellular location is the cell membrane. It is found in the perikaryon. The protein resides in the cell projection. It catalyses the reaction D-glucose(out) = D-glucose(in). The enzyme catalyses D-galactose(in) = D-galactose(out). Deoxyglucose transport is inhibited by D-glucose, D-galactose and maltose. Galactose transport is inhibited by D-glucose and maltose. In terms of biological role, facilitative glucose transporter. Can also mediate the uptake of various other monosaccharides across the cell membrane. Mediates the uptake of glucose, 2-deoxyglucose, galactose, mannose, xylose and fucose, and probably also dehydroascorbate. Does not mediate fructose transport. Required for mesendoderm differentiation. This is Solute carrier family 2, facilitated glucose transporter member 3 from Homo sapiens (Human).